The chain runs to 246 residues: Octanoyltransferase (246 aa).

Positions 38–213 constitute a BPL/LPL catalytic domain; it reads AQQSDEFWVL…FLAKRLGLTP (176 aa). Residues 77–84, 144–146, and 157–159 each bind substrate; these read RGGQVTYH, SLG, and GLA. The active-site Acyl-thioester intermediate is the Cys175. Positions 225-246 are disordered; it reads RQENVTTGGDPGSALTQQPERL.

Belongs to the LipB family.

It localises to the cytoplasm. The catalysed reaction is octanoyl-[ACP] + L-lysyl-[protein] = N(6)-octanoyl-L-lysyl-[protein] + holo-[ACP] + H(+). It participates in protein modification; protein lipoylation via endogenous pathway; protein N(6)-(lipoyl)lysine from octanoyl-[acyl-carrier-protein]: step 1/2. In terms of biological role, catalyzes the transfer of endogenously produced octanoic acid from octanoyl-acyl-carrier-protein onto the lipoyl domains of lipoate-dependent enzymes. Lipoyl-ACP can also act as a substrate although octanoyl-ACP is likely to be the physiological substrate. The polypeptide is Octanoyltransferase (Alcanivorax borkumensis (strain ATCC 700651 / DSM 11573 / NCIMB 13689 / SK2)).